The sequence spans 410 residues: Cytochrome P450 105A3 (410 aa).

Cysteine 359 provides a ligand contact to heme.

Belongs to the cytochrome P450 family. In terms of assembly, monomer. Heme is required as a cofactor.

Functionally, catalyzes the hydroxylation of sodium ML-236B carboxylate to pravastatin. In Streptomyces carbophilus, this protein is Cytochrome P450 105A3 (cyp105A3).